The sequence spans 245 residues: MIIPAIDLIDGKVVRLYQGDYGQQTTFDLSPLAQLQSYQAQDASWLHIVDLTGAKDPAKRQTALIAALTAGLSANIQVGGGIRTEEQVAELLSLGVKRVVIGSLAVKEPELVKGWFNKFGNEAICLALDINITPSGEKIVAVSGWQNGGGKNLESIVEDFSQVGLKHALVTDISRDGTLTGANTELYCELSSRYPNIAWQASGGIASLEDVAAVRDSGAAGIIIGKALLINQFNVAEAIQCWPNE.

Asp-7 serves as the catalytic Proton acceptor. Catalysis depends on Asp-129, which acts as the Proton donor.

Belongs to the HisA/HisF family.

The protein localises to the cytoplasm. The catalysed reaction is 1-(5-phospho-beta-D-ribosyl)-5-[(5-phospho-beta-D-ribosylamino)methylideneamino]imidazole-4-carboxamide = 5-[(5-phospho-1-deoxy-D-ribulos-1-ylimino)methylamino]-1-(5-phospho-beta-D-ribosyl)imidazole-4-carboxamide. The protein operates within amino-acid biosynthesis; L-histidine biosynthesis; L-histidine from 5-phospho-alpha-D-ribose 1-diphosphate: step 4/9. This chain is 1-(5-phosphoribosyl)-5-[(5-phosphoribosylamino)methylideneamino] imidazole-4-carboxamide isomerase, found in Shewanella oneidensis (strain ATCC 700550 / JCM 31522 / CIP 106686 / LMG 19005 / NCIMB 14063 / MR-1).